Reading from the N-terminus, the 257-residue chain is MDPAVASLGILALTTASAIIGQTIEDVETNIGSQSNPNSQVQLAPQMGNLHRFFNKAIAGEPFAYCTFCGVSGAITVATLYLHLPAVIALAIGAAITTLIWLAYSTTAYLGRVSGSATFNQPVFLDMLTENLGPIAGHAFIVFFCMTGVAYLMTLPVKGFAHPFPIPVIGMIWGMTIGAIGSAVGDVYYGAEAEFVHKKFGGGIPVASHGDITRKGVLGARSPMEVGNFTVKYGSPITGMAFGLIVLSITRGVYNIE.

Helical transmembrane passes span 4 to 24, 62 to 82, 84 to 104, 132 to 152, 164 to 184, and 229 to 249; these read AVAS…GQTI, PFAY…TLYL, LPAV…WLAY, LGPI…VAYL, FPIP…GSAV, and FTVK…VLSI.

The protein belongs to the MtrE family. As to quaternary structure, the complex is composed of 8 subunits; MtrA, MtrB, MtrC, MtrD, MtrE, MtrF, MtrG and MtrH.

The protein localises to the cell membrane. The catalysed reaction is 5-methyl-5,6,7,8-tetrahydromethanopterin + coenzyme M + 2 Na(+)(in) = 5,6,7,8-tetrahydromethanopterin + methyl-coenzyme M + 2 Na(+)(out). It functions in the pathway one-carbon metabolism; methanogenesis from CO(2); methyl-coenzyme M from 5,10-methylene-5,6,7,8-tetrahydromethanopterin: step 2/2. Part of a complex that catalyzes the formation of methyl-coenzyme M and tetrahydromethanopterin from coenzyme M and methyl-tetrahydromethanopterin. This is an energy-conserving, sodium-ion translocating step. The chain is Tetrahydromethanopterin S-methyltransferase subunit E (mtrE) from Methanothermus fervidus.